Here is a 158-residue protein sequence, read N- to C-terminus: NAD(P)H-quinone oxidoreductase subunit N (158 aa).

This sequence belongs to the complex I NdhN subunit family. As to quaternary structure, NDH-1 can be composed of about 15 different subunits; different subcomplexes with different compositions have been identified which probably have different functions.

It localises to the cellular thylakoid membrane. It catalyses the reaction a plastoquinone + NADH + (n+1) H(+)(in) = a plastoquinol + NAD(+) + n H(+)(out). The catalysed reaction is a plastoquinone + NADPH + (n+1) H(+)(in) = a plastoquinol + NADP(+) + n H(+)(out). Functionally, NDH-1 shuttles electrons from an unknown electron donor, via FMN and iron-sulfur (Fe-S) centers, to quinones in the respiratory and/or the photosynthetic chain. The immediate electron acceptor for the enzyme in this species is believed to be plastoquinone. Couples the redox reaction to proton translocation, and thus conserves the redox energy in a proton gradient. Cyanobacterial NDH-1 also plays a role in inorganic carbon-concentration. The polypeptide is NAD(P)H-quinone oxidoreductase subunit N (Nostoc punctiforme (strain ATCC 29133 / PCC 73102)).